The chain runs to 197 residues: Probable chorismate pyruvate-lyase (197 aa).

Over residues 1-14 the composition is skewed to basic and acidic residues; the sequence is MRFDAADAHWRETP. The interval 1-25 is disordered; sequence MRFDAADAHWRETPRPGASGAQKDW. Substrate is bound by residues R73, L111, and E173.

Belongs to the UbiC family.

It localises to the cytoplasm. The catalysed reaction is chorismate = 4-hydroxybenzoate + pyruvate. Its pathway is cofactor biosynthesis; ubiquinone biosynthesis. In terms of biological role, removes the pyruvyl group from chorismate, with concomitant aromatization of the ring, to provide 4-hydroxybenzoate (4HB) for the ubiquinone pathway. This Burkholderia thailandensis (strain ATCC 700388 / DSM 13276 / CCUG 48851 / CIP 106301 / E264) protein is Probable chorismate pyruvate-lyase.